The primary structure comprises 105 residues: Nucleoid-associated protein TTHA1599 (105 aa).

This sequence belongs to the YbaB/EbfC family. As to quaternary structure, homodimer.

The protein resides in the cytoplasm. The protein localises to the nucleoid. Functionally, binds to DNA and alters its conformation. May be involved in regulation of gene expression, nucleoid organization and DNA protection. The chain is Nucleoid-associated protein TTHA1599 from Thermus thermophilus (strain ATCC 27634 / DSM 579 / HB8).